The sequence spans 179 residues: tRNA (cytidine(56)-2'-O)-methyltransferase (179 aa).

Leu-84 serves as a coordination point for S-adenosyl-L-methionine.

It belongs to the aTrm56 family. As to quaternary structure, homodimer.

It is found in the cytoplasm. The enzyme catalyses cytidine(56) in tRNA + S-adenosyl-L-methionine = 2'-O-methylcytidine(56) in tRNA + S-adenosyl-L-homocysteine + H(+). Specifically catalyzes the AdoMet-dependent 2'-O-ribose methylation of cytidine at position 56 in tRNAs. In Methanothermobacter thermautotrophicus (strain ATCC 29096 / DSM 1053 / JCM 10044 / NBRC 100330 / Delta H) (Methanobacterium thermoautotrophicum), this protein is tRNA (cytidine(56)-2'-O)-methyltransferase.